Here is a 90-residue protein sequence, read N- to C-terminus: MARTVFCTRLQKEADGLDFQLYPGELGKRIFDNICKEAWAQWQTKQTMLINEKKLNMMDPEHRKLLEQEMVNFLFEGKEVHIEGYTPPAK.

This sequence belongs to the Fe(2+)-trafficking protein family.

Functionally, could be a mediator in iron transactions between iron acquisition and iron-requiring processes, such as synthesis and/or repair of Fe-S clusters in biosynthetic enzymes. The sequence is that of Probable Fe(2+)-trafficking protein from Vibrio cholerae serotype O1 (strain ATCC 39541 / Classical Ogawa 395 / O395).